A 215-amino-acid polypeptide reads, in one-letter code: Cytochrome b6 (215 aa).

A helical membrane pass occupies residues 32–52 (IFYCLGGITLTCFLVQVATGF). Cysteine 35 serves as a coordination point for heme c. The heme b site is built by histidine 86 and histidine 100. 3 helical membrane-spanning segments follow: residues 90–110 (ASMM…TGGF), 116–136 (LTWV…VTGY), and 186–206 (LHTF…FLMI). Positions 187 and 202 each coordinate heme b.

The protein belongs to the cytochrome b family. PetB subfamily. As to quaternary structure, the 4 large subunits of the cytochrome b6-f complex are cytochrome b6, subunit IV (17 kDa polypeptide, PetD), cytochrome f and the Rieske protein, while the 4 small subunits are PetG, PetL, PetM and PetN. The complex functions as a dimer. It depends on heme b as a cofactor. Requires heme c as cofactor.

The protein resides in the plastid. It localises to the chloroplast thylakoid membrane. Component of the cytochrome b6-f complex, which mediates electron transfer between photosystem II (PSII) and photosystem I (PSI), cyclic electron flow around PSI, and state transitions. The chain is Cytochrome b6 from Pinus thunbergii (Japanese black pine).